Reading from the N-terminus, the 513-residue chain is Probable cytosol aminopeptidase (513 aa).

The Mn(2+) site is built by K277 and D282. Residue K289 is part of the active site. Residues D300, D359, and E361 each coordinate Mn(2+). The active site involves R363.

Belongs to the peptidase M17 family. Mn(2+) is required as a cofactor.

The protein resides in the cytoplasm. It catalyses the reaction Release of an N-terminal amino acid, Xaa-|-Yaa-, in which Xaa is preferably Leu, but may be other amino acids including Pro although not Arg or Lys, and Yaa may be Pro. Amino acid amides and methyl esters are also readily hydrolyzed, but rates on arylamides are exceedingly low.. The catalysed reaction is Release of an N-terminal amino acid, preferentially leucine, but not glutamic or aspartic acids.. Presumably involved in the processing and regular turnover of intracellular proteins. Catalyzes the removal of unsubstituted N-terminal amino acids from various peptides. In Mycobacterium sp. (strain JLS), this protein is Probable cytosol aminopeptidase.